The following is a 669-amino-acid chain: MALGLQRARSTTELRKEKSRDAARSRRSQETEVLYQLAHTLPFARGVSAHLDKASIMRLTISYLRMHRLCAAGEWNQVGAGGEPLDACYLKALEGFVMVLTAEGDMAYLSENVSKHLGLSQLELIGHSIFDFIHPCDQEELQDALTPQQTLSRRKVEAPTERCFSLRMKSTLTSRGRTLNLKAATWKVLNCSGHMRAYKPPAQTSPAGSPDSEPPLQCLVLICEAIPHPGSLEPPLGRGAFLSRHSLDMKFTYCDDRIAEVAGYSPDDLIGCSAYEYIHALDSDAVSKSIHTLLSKGQAVTGQYRFLARSGGYLWTQTQATVVSGGRGPQSESIVCVHFLISQVEETGVVLSLEQTEQHSRRPIQRGAPSQKDTPNPGDSLDTPGPRILAFLHPPSLSEAALAADPRRFCSPDLRRLLGPILDGASVAATPSTPLATRHPQSPLSADLPDELPVGTENVHRLFTSGKDTEAVETDLDIAQDADALDLEMLAPYISMDDDFQLNASEQLPRAYHRPLGAVPRPRARSFHGLSPPALEPSLLPRWGSDPRLSCSSPSRGDPSASSPMAGARKRTLAQSSEDEDEGVELLGVRPPKRSPSPEHENFLLFPLSLSFLLTGGPAPGSLQDPSTPLLNLNEPLGLGPSLLSPYSDEDTTQPGGPFQPRAGSAQAD.

The segment at 1–27 is disordered; sequence MALGLQRARSTTELRKEKSRDAARSRR. The segment covering 10 to 27 has biased composition (basic and acidic residues); the sequence is STTELRKEKSRDAARSRR. Residues 14-67 form the bHLH domain; that stretch reads LRKEKSRDAARSRRSQETEVLYQLAHTLPFARGVSAHLDKASIMRLTISYLRMH. Residues 77-100 are nuclear localization signal; the sequence is QVGAGGEPLDACYLKALEGFVMVL. PAS domains are found at residues 82 to 154 and 227 to 297; these read GEPL…LSRR and PHPG…LSKG. Residues 230 to 274 are nuclear export signal; that stretch reads GSLEPPLGRGAFLSRHSLDMKFTYCDDRIAEVAGYSPDDLIGCSA. Positions 354 to 389 are disordered; the sequence is EQTEQHSRRPIQRGAPSQKDTPNPGDSLDTPGPRIL. The LRRLL signature appears at 414–418; it reads LRRLL. Residues 430–444 are compositionally biased toward polar residues; that stretch reads TPSTPLATRHPQSPL. The tract at residues 430 to 451 is disordered; the sequence is TPSTPLATRHPQSPLSADLPDE. Positions 452 to 581 are ODD; the sequence is LPVGTENVHR…TLAQSSEDED (130 aa). The segment at 454 to 506 is NTAD; it reads VGTENVHRLFTSGKDTEAVETDLDIAQDADALDLEMLAPYISMDDDFQLNASE. Lys-467 participates in a covalent cross-link: Glycyl lysine isopeptide (Lys-Gly) (interchain with G-Cter in ubiquitin). Positions 490–497 match the LAPYISMD motif; sequence LAPYISMD. Pro-492 is modified (4-hydroxyproline). 2 disordered regions span residues 523-600 and 619-669; these read RARS…SPEH and APGS…AQAD. 2 stretches are compositionally biased toward low complexity: residues 530-541 and 550-564; these read LSPPALEPSLLP and SCSSPSRGDPSASSP. A Glycyl lysine isopeptide (Lys-Gly) (interchain with G-Cter in ubiquitin) cross-link involves residue Lys-570. The span at 629–646 shows a compositional bias: low complexity; it reads PLLNLNEPLGLGPSLLSP.

As to quaternary structure, isoform 2 interacts (via ODD domain) with VHL (via beta domain). Isoform 4 interacts with HIF1A; the interaction inhibits the binding of HIF1A to hypoxia-responsive element (HRE) and HIF1A/ARNT-dependent transcriptional activation. Isoform 4 interacts with ARNT; the interaction occurs in a HIF1A- and DNA-binding-independent manner and does not induce HIF1A/ARNT-dependent transcriptional activation. Isoform 4 interacts with EPAS1. Interacts with BAD, BCL2L2 and MCL1. In terms of processing, in normoxia, hydroxylated on Pro-492 in the oxygen-dependent degradation domain (ODD) by prolyl hydroxylase(s) (PHD). The hydroxylated proline promotes interaction with VHL, initiating rapid ubiquitination and subsequent proteasomal degradation. Ubiquitinated; ubiquitination occurs in a VHL- and oxygen-dependent pathway and subsequently targeted for proteasomal degradation. Expressed in vascular cells (at protein level). Expressed in kidney. Expressed in lung epithelial cells. Expressed in endothelial cells (venous and arterial cells from umbilical cord and aortic endothelial cells) and in vascular smooth muscle cells (aorta). Strongly expressed in the heart, placenta, and skeletal muscle, whereas a weak expression profile was found in the lung, liver, and kidney. Expressed weakly in cell renal cell carcinoma (CC-RCC) compared to normal renal cells. Expression is down-regulated in numerous kidney tumor cells compared to non tumor kidney tissues. Isoform 2 is expressed in heart, placenta, lung, liver, skeletal muscle and pancreas and in numerous cancer cell lines. Isoform 3 and isoform 4 are weakly expressed in heart, placenta, lung, liver, skeletal muscle and pancreas. Isoform 4 is expressed in fetal tissues, such as heart, brain, thymus, lung, liver, skeletal kidney and spleen. Isoform 3 is weakly expressed in fetal tissues, such as liver and kidney.

It localises to the nucleus. It is found in the cytoplasm. Its subcellular location is the nucleus speckle. The protein localises to the mitochondrion. In terms of biological role, acts as a transcriptional regulator in adaptive response to low oxygen tension. Acts as a regulator of hypoxia-inducible gene expression. Functions as an inhibitor of angiogenesis in hypoxic cells of the cornea. Plays a role in the development of the cardiorespiratory system. May also be involved in apoptosis. Attenuates the ability of transcription factor HIF1A to bind to hypoxia-responsive elements (HRE) located within the enhancer/promoter of hypoxia-inducible target genes and hence inhibits HRE-driven transcriptional activation. Also inhibits hypoxia-inducible ARNT-mediated gene expression. Functionally, attenuates the ability of transcription factor HIF1A to bind to hypoxia-responsive elements (HRE) located within the enhancer/promoter of hypoxia-inducible target genes and hence inhibits HRE-driven transcriptional activation. Its function is as follows. Attenuates the ability of transcription factor HIF1A and EPAS1/HIF2A to bind to hypoxia-responsive elements (HRE) located within the enhancer/promoter of hypoxia-inducible target genes and hence inhibits HRE-driven transcriptional activation. May act as a tumor suppressor and inhibits malignant cell transformation. In Homo sapiens (Human), this protein is Hypoxia-inducible factor 3-alpha.